Reading from the N-terminus, the 315-residue chain is Methenyltetrahydromethanopterin cyclohydrolase (315 aa).

Belongs to the MCH family.

It localises to the cytoplasm. The catalysed reaction is 5,10-methenyl-5,6,7,8-tetrahydromethanopterin + H2O = N(5)-formyl-5,6,7,8-tetrahydromethanopterin + H(+). It participates in one-carbon metabolism; methanogenesis from CO(2); 5,10-methenyl-5,6,7,8-tetrahydromethanopterin from CO(2): step 3/3. Catalyzes the reversible interconversion of 5-formyl-H(4)MPT to methenyl-H(4)MPT(+). This is Methenyltetrahydromethanopterin cyclohydrolase from Methanoculleus marisnigri (strain ATCC 35101 / DSM 1498 / JR1).